We begin with the raw amino-acid sequence, 687 residues long: Glycine--tRNA ligase beta subunit (687 aa).

Belongs to the class-II aminoacyl-tRNA synthetase family. In terms of assembly, tetramer of two alpha and two beta subunits.

The protein resides in the cytoplasm. The catalysed reaction is tRNA(Gly) + glycine + ATP = glycyl-tRNA(Gly) + AMP + diphosphate. In Trichlorobacter lovleyi (strain ATCC BAA-1151 / DSM 17278 / SZ) (Geobacter lovleyi), this protein is Glycine--tRNA ligase beta subunit.